The chain runs to 325 residues: tRNA dimethylallyltransferase (325 aa).

11-18 serves as a coordination point for ATP; sequence GPTASGKS. 13-18 contacts substrate; sequence TASGKS. 2 interaction with substrate tRNA regions span residues 36-39 and 160-164; these read DSMQ and QRLIR.

Belongs to the IPP transferase family. In terms of assembly, monomer. Requires Mg(2+) as cofactor.

It carries out the reaction adenosine(37) in tRNA + dimethylallyl diphosphate = N(6)-dimethylallyladenosine(37) in tRNA + diphosphate. In terms of biological role, catalyzes the transfer of a dimethylallyl group onto the adenine at position 37 in tRNAs that read codons beginning with uridine, leading to the formation of N6-(dimethylallyl)adenosine (i(6)A). The sequence is that of tRNA dimethylallyltransferase from Rickettsia canadensis (strain McKiel).